Here is a 248-residue protein sequence, read N- to C-terminus: Anamorsin homolog (248 aa).

The segment at 4-130 (FKGLQKSLYI…ETGSSARLSF (127 aa)) is N-terminal SAM-like domain. Positions 131-161 (AKKTSSVNVWKISGDDEELIDEEELLDEEDK) are linker. [2Fe-2S] cluster is bound by residues Cys-172, Cys-181, Cys-184, and Cys-186. Residues 172-186 (CSTTGKRKACKNCSC) form a fe-S binding site A region. [4Fe-4S] cluster contacts are provided by Cys-209, Cys-212, Cys-220, and Cys-223. 2 consecutive short sequence motifs (cx2C motif) follow at residues 209-212 (CGNC) and 220-223 (CSTC). Residues 209 to 223 (CGNCYLGDAFRCSTC) form a fe-S binding site B region.

The protein belongs to the anamorsin family. As to quaternary structure, monomer. Requires [2Fe-2S] cluster as cofactor. The cofactor is [4Fe-4S] cluster.

It localises to the cytoplasm. The protein localises to the mitochondrion intermembrane space. In terms of biological role, component of the cytosolic iron-sulfur (Fe-S) protein assembly (CIA) machinery. Required for the maturation of extramitochondrial Fe-S proteins. Part of an electron transfer chain functioning in an early step of cytosolic Fe-S biogenesis, facilitating the de novo assembly of a [4Fe-4S] cluster on the cytosolic Fe-S scaffold complex. Electrons are transferred from NADPH via a FAD- and FMN-containing diflavin oxidoreductase. Together with the diflavin oxidoreductase, also required for the assembly of the diferric tyrosyl radical cofactor of ribonucleotide reductase (RNR), probably by providing electrons for reduction during radical cofactor maturation in the catalytic small subunit. This is Anamorsin homolog from Drosophila virilis (Fruit fly).